Reading from the N-terminus, the 184-residue chain is Gremlin-1 (184 aa).

Residues 1–24 (MNRTAYTVGALLLLLGTLLPTAEG) form the signal peptide. The disordered stretch occupies residues 23 to 77 (EGKKKGSQGAIPPPDKAQHNDSEQTQSPPQPGSRTRGRGQGRGTAMPGEEVLESS). An N-linked (GlcNAc...) asparagine glycan is attached at asparagine 42. Disulfide bonds link cysteine 94–cysteine 144, cysteine 108–cysteine 158, cysteine 118–cysteine 176, and cysteine 122–cysteine 178. Residues 94-184 (CKTQPLKQTI…QCRCISIDLD (91 aa)) enclose the CTCK domain.

The protein belongs to the DAN family. As to quaternary structure, homodimer; can also form homooligomers. Interacts with BMP2; can form higher oligomers with BMP2. Interacts with SLIT1 and SLIT2 in a glycosylation-dependent manner. Highly expressed in spleen and to a lesser extent in lung, skeletal muscle and kidney. Expressed only in non-transformed cells or primary fibroblasts in culture but not in established transformed or tumor derived cell lines. Broadly expressed in limb bud mesenchyme but restricted to the distal limb bud mesenchyme and concentrated posteriorly. Expressed in ovary especially in granulosa cells of follicles of type 4.

The protein localises to the secreted. Its function is as follows. Cytokine that may play an important role during carcinogenesis and metanephric kidney organogenesis, as BMP a antagonist required for early limb outgrowth and patterning in maintaining the FGF4-SHH feedback loop. Down-regulates the BMP4 signaling in a dose-dependent manner. Antagonist of BMP2; inhibits BMP2-mediated differentiation of osteoblasts (in vitro). Acts as inhibitor of monocyte chemotaxis. The sequence is that of Gremlin-1 (Grem1) from Mus musculus (Mouse).